Consider the following 652-residue polypeptide: DNA ligase (652 aa).

NAD(+)-binding positions include Asp-29 to Asp-33, Ser-78 to Leu-79, and Glu-107. Lys-109 functions as the N6-AMP-lysine intermediate in the catalytic mechanism. 4 residues coordinate NAD(+): Arg-130, Glu-164, Lys-278, and Lys-302. Zn(2+) contacts are provided by Cys-395, Cys-398, Cys-413, and Cys-418. A BRCT domain is found at Ala-577–Leu-652.

Belongs to the NAD-dependent DNA ligase family. LigA subfamily. It depends on Mg(2+) as a cofactor. The cofactor is Mn(2+).

The catalysed reaction is NAD(+) + (deoxyribonucleotide)n-3'-hydroxyl + 5'-phospho-(deoxyribonucleotide)m = (deoxyribonucleotide)n+m + AMP + beta-nicotinamide D-nucleotide.. DNA ligase that catalyzes the formation of phosphodiester linkages between 5'-phosphoryl and 3'-hydroxyl groups in double-stranded DNA using NAD as a coenzyme and as the energy source for the reaction. It is essential for DNA replication and repair of damaged DNA. This Streptococcus thermophilus (strain CNRZ 1066) protein is DNA ligase.